The sequence spans 45 residues: Large ribosomal subunit protein bL34 (45 aa).

It belongs to the bacterial ribosomal protein bL34 family.

This chain is Large ribosomal subunit protein bL34, found in Arthrobacter sp. (strain FB24).